A 497-amino-acid polypeptide reads, in one-letter code: tRNA-2-methylthio-N(6)-dimethylallyladenosine synthase (497 aa).

The MTTase N-terminal domain maps to 4-120 (RSYEVRTFGC…LPVLLERARH (117 aa)). 6 residues coordinate [4Fe-4S] cluster: Cys-13, Cys-49, Cys-83, Cys-157, Cys-161, and Cys-164. Residues 143–374 (RASHHSAWVS…ALQDEVSWAQ (232 aa)) enclose the Radical SAM core domain. The 70-residue stretch at 376-445 (RELVGRRVEL…PHHLTADGPL (70 aa)) folds into the TRAM domain.

It belongs to the methylthiotransferase family. MiaB subfamily. As to quaternary structure, monomer. [4Fe-4S] cluster serves as cofactor.

Its subcellular location is the cytoplasm. It carries out the reaction N(6)-dimethylallyladenosine(37) in tRNA + (sulfur carrier)-SH + AH2 + 2 S-adenosyl-L-methionine = 2-methylsulfanyl-N(6)-dimethylallyladenosine(37) in tRNA + (sulfur carrier)-H + 5'-deoxyadenosine + L-methionine + A + S-adenosyl-L-homocysteine + 2 H(+). Catalyzes the methylthiolation of N6-(dimethylallyl)adenosine (i(6)A), leading to the formation of 2-methylthio-N6-(dimethylallyl)adenosine (ms(2)i(6)A) at position 37 in tRNAs that read codons beginning with uridine. This chain is tRNA-2-methylthio-N(6)-dimethylallyladenosine synthase, found in Frankia alni (strain DSM 45986 / CECT 9034 / ACN14a).